The primary structure comprises 354 residues: Ornithine transcarbamylase, mitochondrial (354 aa).

The transit peptide at Met-1–Gln-32 directs the protein to the mitochondrion. Lys-70 carries the N6-acetyllysine; alternate modification. N6-succinyllysine; alternate is present on Lys-70. Lys-80 is modified (N6-succinyllysine). Lys-88 is subject to N6-acetyllysine; alternate. Lys-88 bears the N6-succinyllysine; alternate mark. Position 133 is a phosphoserine (Ser-133). N6-acetyllysine; alternate is present on residues Lys-144, Lys-221, Lys-231, and Lys-238. Residues Lys-144, Lys-221, Lys-231, and Lys-238 each carry the N6-succinyllysine; alternate modification. Lys-243 carries the N6-acetyllysine modification. Asp-263 is a catalytic residue. An N6-succinyllysine mark is found at Lys-274 and Lys-289. The residue at position 292 (Lys-292) is an N6-acetyllysine; alternate. An N6-succinyllysine; alternate modification is found at Lys-292. Cys-303 is an active-site residue. Lys-307 is subject to N6-acetyllysine; alternate. Lys-307 bears the N6-succinyllysine; alternate mark.

Belongs to the aspartate/ornithine carbamoyltransferase superfamily. OTCase family. As to quaternary structure, homotrimer. Acetylation at Lys-88 negatively regulates ornithine carbamoyltransferase activity in response to nutrient signals.

The protein resides in the mitochondrion matrix. The catalysed reaction is carbamoyl phosphate + L-ornithine = L-citrulline + phosphate + H(+). It functions in the pathway nitrogen metabolism; urea cycle; L-citrulline from L-ornithine and carbamoyl phosphate: step 1/1. With respect to regulation, negatively regulated by lysine acetylation. Its function is as follows. Catalyzes the second step of the urea cycle, the condensation of carbamoyl phosphate with L-ornithine to form L-citrulline. The urea cycle ensures the detoxification of ammonia by converting it to urea for excretion. The sequence is that of Ornithine transcarbamylase, mitochondrial from Bos taurus (Bovine).